Here is a 410-residue protein sequence, read N- to C-terminus: Multidrug resistance protein MdtM (410 aa).

Over 1-11 the chain is Cytoplasmic; the sequence is MPRFFTRHAAT. Residues 12–32 traverse the membrane as a helical segment; the sequence is LFFPMALILYDFAAYLSTDLI. At 33 to 48 the chain is on the periplasmic side; sequence QPGIINVVRDFNADVS. Residues 49–69 form a helical membrane-spanning segment; sequence LAPAAVSLYLAGGMALQWLLG. Residues 70-78 are Cytoplasmic-facing; sequence PLSDRIGRR. The chain crosses the membrane as a helical span at residues 79-99; that stretch reads PVLITGALIFTLACAATMFTT. Topologically, residues 100–103 are periplasmic; sequence SMTQ. The helical transmembrane segment at 104–124 threads the bilayer; the sequence is FLIARAIQGTSICFIATVGYV. Topologically, residues 125-140 are cytoplasmic; sequence TVQEAFGQTKGIKLMA. Residues 141-161 form a helical membrane-spanning segment; sequence IITSIVLIAPIIGPLSGAALM. At 162-167 the chain is on the periplasmic side; sequence HFMHWK. The chain crosses the membrane as a helical span at residues 168–188; it reads VLFAIIAVMGFISFVGLLLAM. Residues 189–216 are Cytoplasmic-facing; the sequence is PETVKRGAVPFSAKSVLRDFRNVFCNRL. The chain crosses the membrane as a helical span at residues 217-237; sequence FLFGAATISLSYIPMMSWVAV. Topologically, residues 238–251 are periplasmic; the sequence is SPVILIDAGSLTTS. A helical transmembrane segment spans residues 252-272; that stretch reads QFAWTQVPVFGAVIVANAIVA. The Cytoplasmic portion of the chain corresponds to 273–282; the sequence is RFVKDPTEPR. The helical transmembrane segment at 283-303 threads the bilayer; sequence FIWRAVPIQLVGLSLLIVGNL. Residues 304 to 307 are Periplasmic-facing; that stretch reads LSPH. A helical transmembrane segment spans residues 308–328; the sequence is VWLWSVLGTSLYAFGIGLIFP. At 329-348 the chain is on the cytoplasmic side; sequence TLFRFTLFSNKLPKGTVSAS. A helical membrane pass occupies residues 349–369; the sequence is LNMVILMVMSVSVEIGRWLWF. Topologically, residues 370–373 are periplasmic; that stretch reads NGGR. The chain crosses the membrane as a helical span at residues 374-394; it reads LPFHLLAVVAGVIVVFTLAGL. The Cytoplasmic portion of the chain corresponds to 395-410; it reads LNRVRQHQAAELVEEQ.

This sequence belongs to the major facilitator superfamily. Monomer.

The protein resides in the cell inner membrane. The enzyme catalyses Na(+)(in) + 2 H(+)(out) = Na(+)(out) + 2 H(+)(in). It catalyses the reaction K(+)(in) + H(+)(out) = K(+)(out) + H(+)(in). With respect to regulation, efflux is inhibited by the ionophore carbonyl cyanide 3-chlorophenylhydrazone (CCCP). Proton-dependent efflux pump. Confers resistance to a broad spectrum of chemically unrelated substrates. Overexpression confers resistance to acriflavine, chloramphenicol, norfloxacin, ethidium bromide and tetraphenylphosphonium bromide (TPP). Can also export a broad range of quaternary ammonium compounds (QACs) and contribute to the intrinsic resistance of E.coli to these antimicrobial compounds. In addition to its role in multidrug resistance, MdtM likely plays a physiological role in alkaline pH homeostasis and in resistance to bile salts. May function in alkaline pH homeostasis when millimolar concentrations of sodium or potassium are present in the growth medium. When overexpressed, can confer a tolerance to alkaline pH values up to 9.75. Probably acts as a low-affinity antiporter that catalyzes the exchange of internal Na(+) and K(+) cations for extracellular protons to maintain a stable internal pH, acid relative to outside, during exposure to alkaline environments. Can also catalyze Rb(+)/H(+) and Li(+)/H(+) antiport, but not Ca(2+)/H(+) exchange. The exact stoichiometry of antiport is unknown. Finally, it could contribute to bile salt resistance by catalyzing the transport of bile salts out of the cell cytoplasm. Mediates a bile salt/H(+) exchange driven by the electrochemical gradient. Binds to cholate and deoxycholate with micromolar affinity and catalyzes both cholate/H(+) and deoxycholate/H(+) exchange reactions. The chain is Multidrug resistance protein MdtM from Escherichia coli (strain K12).